The chain runs to 334 residues: Nucleoid-associated protein Pfl01_0983 (334 aa).

It belongs to the YejK family.

Its subcellular location is the cytoplasm. It localises to the nucleoid. This chain is Nucleoid-associated protein Pfl01_0983, found in Pseudomonas fluorescens (strain Pf0-1).